The sequence spans 71 residues: Long neurotoxin 1 (71 aa).

5 disulfide bridges follow: cysteine 3-cysteine 20, cysteine 14-cysteine 41, cysteine 26-cysteine 30, cysteine 45-cysteine 56, and cysteine 57-cysteine 62.

It belongs to the three-finger toxin family. Long-chain subfamily. Type II alpha-neurotoxin sub-subfamily. Expressed by the venom gland.

Its subcellular location is the secreted. In terms of biological role, binds with high affinity to muscular (alpha-1/CHRNA1) and neuronal (alpha-7/CHRNA7) nicotinic acetylcholine receptor (nAChR) and inhibits acetylcholine from binding to the receptor, thereby impairing neuromuscular and neuronal transmission. The chain is Long neurotoxin 1 from Naja nivea (Cape cobra).